The chain runs to 326 residues: rRNA 2'-O-methyltransferase fibrillarin (326 aa).

Positions 1-84 (MAFQPGSRGG…GGARGGAKGG (84 aa)) are disordered. Residues 7 to 83 (SRGGRGGARG…RGGARGGAKG (77 aa)) show a composition bias toward gly residues. 18 positions are modified to asymmetric dimethylarginine: Arg8, Arg11, Arg15, Arg19, Arg23, Arg26, Arg32, Arg36, Arg39, Arg45, Arg49, Arg55, Arg59, Arg63, Arg67, Arg71, Arg74, and Arg78. Residues 180–181 (TS), 199–200 (EF), 224–225 (DA), and 244–247 (DVAQ) each bind S-adenosyl-L-methionine.

This sequence belongs to the methyltransferase superfamily. Fibrillarin family. As to quaternary structure, component of box C/D small nucleolar ribonucleoprotein (snoRNP) particles that contain SNU13, NOP1, SIK1/NOP56 and NOP58, plus a guide RNA. By homology to other fibrillarins, some or all of the N-terminal domain arginines are modified to asymmetric dimethylarginine (DMA).

The protein resides in the nucleus. It localises to the nucleolus. It catalyses the reaction L-glutaminyl-[histone H2A] + S-adenosyl-L-methionine = N(5)-methyl-L-glutaminyl-[histone H2A] + S-adenosyl-L-homocysteine + H(+). S-adenosyl-L-methionine-dependent methyltransferase that has the ability to methylate both RNAs and proteins. Involved in pre-rRNA processing. Utilizes the methyl donor S-adenosyl-L-methionine to catalyze the site-specific 2'-hydroxyl methylation of ribose moieties in pre-ribosomal RNA. Site specificity is provided by a guide RNA that base pairs with the substrate. Methylation occurs at a characteristic distance from the sequence involved in base pairing with the guide RNA. Also acts as a protein methyltransferase by mediating methylation of 'Gln-105' of histone H2A (H2AQ105me), a modification that impairs binding of the FACT complex and is specifically present at 35S ribosomal DNA locus. This chain is rRNA 2'-O-methyltransferase fibrillarin (NOP1), found in Eremothecium gossypii (strain ATCC 10895 / CBS 109.51 / FGSC 9923 / NRRL Y-1056) (Yeast).